Consider the following 279-residue polypeptide: Lysozyme-like protein 2 (279 aa).

Residues Met-1–Pro-19 form the signal peptide. Residues Met-47–Met-265 enclose the Ch-type lysozyme domain.

Belongs to the glycosyl hydrolase 25 family. As to expression, expressed in intestine.

Involved in resistance to Gram-positive bacteria P.aeruginosa or B.thuringiensis infection. This is Lysozyme-like protein 2 from Caenorhabditis elegans.